A 469-amino-acid chain; its full sequence is MSQNTLFDKVWDLHKVSSLPGGSDQIFIGLHLIHEVTSPQAFGALKDKNLKVKFPSRTVATVDHIVPTDNQSRPFKDNLAEQMIETLENNCLQHKIKFFNIGSGNQGIVHVVAPELGLTQPGMTIACGDSHTSTHGAFGSIAFGIGTSQVRDVLATQTIAMNKLKVRQIWCENNLSNGVYAKDLVLHIINELGVKAGVGFAYEFAGPAIDELSMEERMTICNMSIEGGARCGYINPDEKTFSYIKNRLYAPKHTQWDKALLWWKSLKSDENSIYDDVIKLDASKVEPTVTWGITPGQSLGINQLIPLLDDLPPNDQFIAEEAFEYMGFMPGQSIKDTPVDVCFIGSCTNGRISDLRVAAKILKDKKVSKKVKAFVVPGSEKVATEAKEEGLDKIFKDSGFQWREPGCSMCLAMNSDKLIGNQVSASSSNRNFKGRQGSPSGRTLLMSPAMVAAAAINGKVSDVREFINK.

Cys347, Cys407, and Cys410 together coordinate [4Fe-4S] cluster. Over residues 424-441 the composition is skewed to polar residues; sequence SASSSNRNFKGRQGSPSG. The interval 424 to 443 is disordered; sequence SASSSNRNFKGRQGSPSGRT.

It belongs to the aconitase/IPM isomerase family. LeuC type 1 subfamily. Heterodimer of LeuC and LeuD. It depends on [4Fe-4S] cluster as a cofactor.

It catalyses the reaction (2R,3S)-3-isopropylmalate = (2S)-2-isopropylmalate. It functions in the pathway amino-acid biosynthesis; L-leucine biosynthesis; L-leucine from 3-methyl-2-oxobutanoate: step 2/4. Catalyzes the isomerization between 2-isopropylmalate and 3-isopropylmalate, via the formation of 2-isopropylmaleate. The chain is 3-isopropylmalate dehydratase large subunit from Prochlorococcus marinus (strain MIT 9312).